The primary structure comprises 427 residues: Histidine--tRNA ligase (427 aa).

This sequence belongs to the class-II aminoacyl-tRNA synthetase family. Homodimer.

It is found in the cytoplasm. It catalyses the reaction tRNA(His) + L-histidine + ATP = L-histidyl-tRNA(His) + AMP + diphosphate + H(+). The sequence is that of Histidine--tRNA ligase from Aster yellows witches'-broom phytoplasma (strain AYWB).